Reading from the N-terminus, the 473-residue chain is ATP synthase subunit beta (473 aa).

153 to 160 lines the ATP pocket; sequence GGAGVGKT.

This sequence belongs to the ATPase alpha/beta chains family. In terms of assembly, F-type ATPases have 2 components, CF(1) - the catalytic core - and CF(0) - the membrane proton channel. CF(1) has five subunits: alpha(3), beta(3), gamma(1), delta(1), epsilon(1). CF(0) has three main subunits: a(1), b(2) and c(9-12). The alpha and beta chains form an alternating ring which encloses part of the gamma chain. CF(1) is attached to CF(0) by a central stalk formed by the gamma and epsilon chains, while a peripheral stalk is formed by the delta and b chains.

The protein resides in the cell inner membrane. The enzyme catalyses ATP + H2O + 4 H(+)(in) = ADP + phosphate + 5 H(+)(out). Produces ATP from ADP in the presence of a proton gradient across the membrane. The catalytic sites are hosted primarily by the beta subunits. The protein is ATP synthase subunit beta of Rickettsia bellii (strain RML369-C).